Reading from the N-terminus, the 152-residue chain is Protein SprT-like (152 aa).

A SprT-like domain is found at 13–148 (NYVKKVSIED…FACGYCHGRL (136 aa)). Histidine 72 serves as a coordination point for Zn(2+). The active site involves glutamate 73. Residue histidine 76 coordinates Zn(2+).

Belongs to the SprT family. Requires Zn(2+) as cofactor.

Its subcellular location is the cytoplasm. This is Protein SprT-like from Streptococcus agalactiae serotype III (strain NEM316).